An 811-amino-acid polypeptide reads, in one-letter code: Glycerol-3-phosphate acyltransferase (811 aa).

An HXXXXD motif motif is present at residues 303–308 (HRSHMD).

Belongs to the GPAT/DAPAT family.

The protein localises to the cell inner membrane. The catalysed reaction is sn-glycerol 3-phosphate + an acyl-CoA = a 1-acyl-sn-glycero-3-phosphate + CoA. It functions in the pathway phospholipid metabolism; CDP-diacylglycerol biosynthesis; CDP-diacylglycerol from sn-glycerol 3-phosphate: step 1/3. This chain is Glycerol-3-phosphate acyltransferase, found in Haemophilus ducreyi (strain 35000HP / ATCC 700724).